Consider the following 963-residue polypeptide: MAAQRIRAANSNGLPRCKSEGTLIDLSEGFSETSFNDIKVPSPSALLVDNPTPFGNAKEVIAIKDYCPTNFTTLKFSKGDHLYVLDTSGGEWWYAHNTTEMGYIPSSYVQPLNYRNSTLSDSGMIDNLPDSPDEVAKELELLGGWTDDKKVPGRMYSNNPFWNGVQTNPFLNGNVPVMPSLDELNPKSTVDLLLFDAGTSSFTESSSATTNSTGNIFDELPVTNGLHAEPPVRRDNPFFRSKRSYSLSELSVLQAKSDAPTSSSFFTGLKSPAPEQFQSREDFRTAWLNHRKLARSCHDLDLLGQSPGWGQTQAVETNIVCKLDSSGGAVQLPDTSISIHVPEGHVAPGETQQISMKALLDPPLELNSDRSCSISPVLEVKLSNLEVKTSIILEMKVSAEIKNDLFSKSTVGLQCLRSDSKEGPYVSVPLNCSCGDTVQAQLHNLEPCMYVAVVAHGPSILYPSTVWDFINKKVTVGLYGPKHIHPSFKTVVTIFGHDCAPKTLLVSEVTRQAPNPAPVALQLWGKHQFVLSRPQDLKVCMFSNMTNYEVKASEQAKVVRGFQLKLGKVSRLIFPITSQNPNELSDFTLRVQVKDDQEAILTQFCVQTPQPPPKSAIKPSGQRRFLKKNEVGKIILSPFATTTKYPTFQDRPVSSLKFGKLLKTVVRQNKNHYLLEYKKGDGIALLSEERVRLRGQLWTKEWYIGYYQGRVGLVHTKNVLVVGRARPSLCSGPELSTSVLLEQILRPCKFLTYIYASVRTLLMENISSWRSFADALGYVNLPLTFFCRAELDSEPERVASVLEKLKEDCNNTENKERKSFQKELVMALLKMDCQGLVVRLIQDFVLLTTAVEVAQRWRELAEKLAKVSKQQMDAYESPHRDRNGVVDSEAMWKPAYDFLLTWSHQIGDSYRDVIQELHLGLDKMKNPITKRWKHLTGTLILVNSLDVLRAAAFSPADQDDFVI.

One can recognise an SH3 1 domain in the interval 55-114; it reads GNAKEVIAIKDYCPTNFTTLKFSKGDHLYVLDTSGGEWWYAHNTTEMGYIPSSYVQPLNY. 5 positions are modified to phosphoserine: Ser131, Ser246, Ser251, Ser279, and Ser296. One can recognise a ZU5 domain in the interval 317 to 454; the sequence is TNIVCKLDSS…LEPCMYVAVV (138 aa). Ser637 carries the post-translational modification Phosphoserine. The region spanning 654-724 is the SH3 2 domain; that stretch reads SSLKFGKLLK…HTKNVLVVGR (71 aa).

As to quaternary structure, homodimer or homooligomer. Interacts with DNM2, EPS15, clathrin, the adapter protein complex 2/AP-2 and TFRC. Interacts with the Rag GTPases RRAGA, RRAGB, RRAGC and RRAGD; the interaction is most probably direct, preferentially occurs with their inactive GDP-bound form and is negatively regulated by amino acids. In terms of assembly, (Microbial infection) Interacts with molluscum contagiosum virus protein MC159L; this interaction is important for the suppression of autophagy. In terms of processing, phosphorylated upon EGF stimulation. Phosphorylation prevents interaction with DNM2. Expressed in all tissues tested with higher expression in pancreas. Expressed by retinal pigment epithelial cells (at protein level).

It localises to the membrane. It is found in the clathrin-coated pit. The protein localises to the cytoplasmic vesicle. The protein resides in the clathrin-coated vesicle. Its subcellular location is the nucleus. In terms of biological role, may function in transferrin receptor internalization at the plasma membrane through a cargo-specific control of clathrin-mediated endocytosis. Alternatively, may act as a negative regulator of the amino acid-induced TOR signaling by inhibiting the formation of active Rag GTPase complexes. Preferentially binds inactive Rag GTPase complexes and prevents their interaction with the mTORC1 complex inhibiting its relocalization to lysosomes and its activation. Thereby, may indirectly regulate cell growth, proliferation and autophagy. The sequence is that of SH3 domain-binding protein 4 (SH3BP4) from Homo sapiens (Human).